A 302-amino-acid polypeptide reads, in one-letter code: Deoxyribonuclease-1-like 1 (302 aa).

Residues 1 to 18 form the signal peptide; sequence MHYPTALLFLILVNGAQA. Residues Glu97 and His148 contribute to the active site. An intrachain disulfide couples Cys187 to Cys224. N-linked (GlcNAc...) asparagine glycosylation occurs at Asn261.

The protein belongs to the DNase I family.

The protein resides in the endoplasmic reticulum. This chain is Deoxyribonuclease-1-like 1 (DNASE1L1), found in Chlorocebus aethiops (Green monkey).